The sequence spans 211 residues: Transcription factor E (211 aa).

In terms of domain architecture, HTH TFE/IIEalpha-type spans 10-130 (GNPAIYQYLL…LWLMRMDHMN (121 aa)).

This sequence belongs to the TFE family. Monomer. Interaction with RNA polymerase subunits RpoF and RpoE is necessary for Tfe stimulatory transcription activity. Able to interact with Tbp and RNA polymerase in the absence of DNA promoter. Interacts both with the preinitiation and elongation complexes.

In terms of biological role, transcription factor that plays a role in the activation of archaeal genes transcribed by RNA polymerase. Facilitates transcription initiation by enhancing TATA-box recognition by TATA-box-binding protein (Tbp), and transcription factor B (Tfb) and RNA polymerase recruitment. Not absolutely required for transcription in vitro, but particularly important in cases where Tbp or Tfb function is not optimal. It dynamically alters the nucleic acid-binding properties of RNA polymerases by stabilizing the initiation complex and destabilizing elongation complexes. Seems to translocate with the RNA polymerase following initiation and acts by binding to the non template strand of the transcription bubble in elongation complexes. This is Transcription factor E from Methanocorpusculum labreanum (strain ATCC 43576 / DSM 4855 / Z).